The chain runs to 877 residues: Transcriptional corepressor SEUSS (877 aa).

2 disordered regions span residues 1 to 42 and 272 to 295; these read MVPS…VSPR and LKSMPQQRPQLPQQFQQQNLPLRP. A compositionally biased stretch (low complexity) spans 272-292; the sequence is LKSMPQQRPQLPQQFQQQNLP. Residues 321–563 are dimerization; that stretch reads PEDNNIEFWR…ETRTGPIESL (243 aa). Residues 330–344 carry the Nuclear localization signal motif; that stretch reads RKFVAEYFAPNAKKR. Disordered regions lie at residues 560 to 599, 612 to 633, and 666 to 753; these read IESLAKFPRRTGPSSALPGPSPQQASDQLRQQQQQQQQQQ, QQTVSQNTNSDQSSRQVALMQG, and GRHQ…NESS. Positions 582-618 form a coiled coil; that stretch reads QQASDQLRQQQQQQQQQQQQQQQQQQQQQQQQTVSQN. The span at 590–599 shows a compositional bias: low complexity; it reads QQQQQQQQQQ. The span at 614-633 shows a compositional bias: polar residues; that stretch reads TVSQNTNSDQSSRQVALMQG. 2 stretches are compositionally biased toward low complexity: residues 688-703 and 711-725; these read QSPSSSGTMVPSSSQQ and QSPTSSSNNNNPSQN. The span at 726 to 741 shows a compositional bias: polar residues; it reads GIPSVNHMGSTNSPAM.

Belongs to the adn1/SEU family. As to quaternary structure, forms a corepressor complex with LUG; LUG is the transcription repressor subunit and SEU the specific DNA-binding adapter. Interacts with AGL24-AP1 and SVP-AP1 dimers when complexed to SEU. Interacts with AP1/AGL7 and SEP3/AGL9. Binds to LUH. Expressed in root, leaves, seedlings, vegetative and reproductive shoot apical meristems, seeds, floral meristems and all floral organs.

The protein localises to the nucleus. The protein resides in the nucleoplasm. In terms of biological role, DNA-binding adapter subunit of the SEU-LUG transcriptional corepressor of the C class floral homeotic gene AGAMOUS during the early stages of floral meristem development. Is part of the A class cadastral complex that define the boundaries between the A and C class homeotic genes expression and function. Interacts together with APETALA2 and LEUNIG to repress AGAMOUS expression. In association with LUG, regulates petal shape through AGAMOUS-independent mechanisms. Controls cell division during petal development and enable the proper patterning of petal blade vasculature. Required for the proper elaboration of petal polarity along the adaxial/abaxial axis. May act through direct or indirect regulation of PHABULOSA and YAB1 and thus regulate cellular proliferation within the developing petal blade. In association with AINTEGUMENTA (ANT), coordinates patterning cues and cellular proliferation along the three positional axes of the developing gynoecium. Required for the development of the medial ridge and subsequent ovule initiation. The polypeptide is Transcriptional corepressor SEUSS (SEU) (Arabidopsis thaliana (Mouse-ear cress)).